Reading from the N-terminus, the 329-residue chain is Arylacetonitrilase (329 aa).

Residues 6-279 (VRVAVTQAEP…EGIVYANLDM (274 aa)) form the CN hydrolase domain. E46 serves as the catalytic Proton acceptor. K126 is a catalytic residue. The Nucleophile role is filled by C161.

The protein belongs to the carbon-nitrogen hydrolase superfamily. Nitrilase family.

The catalysed reaction is a nitrile + 2 H2O = a carboxylate + NH4(+). It catalyses the reaction 4-chlorophenylacetonitrile + 2 H2O = 4-chlorophenylacetate + NH4(+). Functionally, nitrilase that hydrolyzes preferentially phenylacetonitrile and heteroaromatic nitriles, but has significantly lower activity for (R,S)-mandelonitrile. Also acts on dinitriles like phenylenediacetonitriles (PDAs) 1,2-PDA, 1,3-PDA, and 1,4-PDA, and cyanophenyl acetonitriles (CPAs) 2-CPA and 4-CPA. In Hypocrea virens (strain Gv29-8 / FGSC 10586) (Gliocladium virens), this protein is Arylacetonitrilase.